Here is a 564-residue protein sequence, read N- to C-terminus: Kelch repeat and BTB domain-containing protein 1 (564 aa).

The BTB domain maps to 21-88; that stretch reads CDINIVINDE…IYGIPLSLTN (68 aa). One can recognise a BACK domain in the interval 123 to 219; it reads CIDFYIYADK…SLLSPQVIKS (97 aa). Kelch repeat units lie at residues 252-297, 298-346, 347-395, 397-441, 442-492, and 494-539; these read IELI…VLDN, IIYM…ADDE, YIYC…MLNG, IYVI…VHDG, KIYI…SAHN, and LYVG…CEPI.

Interacts (via BTB domain) with host CUL3.

Its subcellular location is the host cytoplasm. In terms of biological role, probable substrate-specific adapter of CUL3-containing E3 ubiquitin-protein ligases which mediate the ubiquitination and subsequent proteasomal degradation of host target proteins. In Cowpox virus (strain GRI-90 / Grishak) (CPV), this protein is Kelch repeat and BTB domain-containing protein 1 (KBTB1).